A 4699-amino-acid chain; its full sequence is PKS-NRPS hybrid synthetase cheA (4699 aa).

The span at 1–21 shows a compositional bias: acidic residues; sequence MSDNDDEWNGFSDDNGEDDGP. Disordered stretches follow at residues 1–38 and 136–165; these read MSDN…WDVP and DGWR…HTQH. Residues 136-148 show a composition bias toward basic and acidic residues; it reads DGWRFHSHPDPQH. The segment at 172-520 is N-terminal acylcarrier protein transacylase domain (SAT); that stretch reads SLDTIAELSN…VQQNVEEMAK (349 aa). Residues 625-836 are disordered; sequence PLPSVEDNVA…AGAPGARVTR (212 aa). The span at 674-688 shows a compositional bias: low complexity; it reads TQGSQGSQGRRTPGS. A compositionally biased stretch (basic residues) spans 724–737; that stretch reads PKRRGRPPGSKNKK. Positions 737–1138 constitute a Ketosynthase family 3 (KS3) domain; it reads KKDQAPAPAE…GANAHAILEA (402 aa). Low complexity predominate over residues 764–777; the sequence is ASAPRRGLRAAPAA. The segment covering 802–816 has biased composition (polar residues); that stretch reads ATASTPRAQSDQGTG. Active-site for beta-ketoacyl synthase activity residues include cysteine 873, histidine 1012, and histidine 1058. The tract at residues 1250–1573 is malonyl-CoA:ACP transacylase (MAT) domain; sequence VFTGQGAQWP…VGTLLRQRDA (324 aa). Positions 1644 to 1777 are N-terminal hotdog fold; the sequence is NELLGTRIMD…ANLIISLGEP (134 aa). The region spanning 1644-1947 is the PKS/mFAS DH domain; sequence NELLGTRIMD…TKPLVPPTPS (304 aa). The dehydratase (DH) domain stretch occupies residues 1645-1941; that stretch reads ELLGTRIMDN…QLQGLHTKPL (297 aa). Histidine 1676 (proton acceptor; for dehydratase activity) is an active-site residue. The tract at residues 1794–1947 is C-terminal hotdog fold; it reads MLDVPAERFY…TKPLVPPTPS (154 aa). Catalysis depends on aspartate 1854, which acts as the Proton donor; for dehydratase activity. The methyltransferase (MT) domain stretch occupies residues 2050-2241; it reads LNRFYIEALG…RNTGFSGADE (192 aa). The interval 2794–2967 is ketoreductase (KR) domain; it reads TYWLVGLTGG…PAAAVNIGAV (174 aa). A Carrier 1 domain is found at 3076 to 3153; it reads DASEILEDAY…ALFELVKERA (78 aa). Serine 3113 bears the O-(pantetheine 4'-phosphoryl)serine mark. The segment at 3164-3265 is disordered; sequence EQPDQVKSPR…PVASSPDAGL (102 aa). Composition is skewed to polar residues over residues 3200 to 3209 and 3218 to 3233; these read SLDQGSSWDS and GHDS…SSPI. The interval 3268–3696 is condensation (C) domain; it reads SVPLSFSQAR…PISRISKPPL (429 aa). Residues 3730 to 4113 form an adenylation (A) domain region; that stretch reads IQAHPDKLAL…GGLILEGRID (384 aa). Residues 4236–4316 form the Carrier 2 domain; the sequence is EGLPAMQHLI…TMAALVASGS (81 aa). Positions 4241–4313 are thiolation and peptide carrier (T) domain; that stretch reads MQHLIKQLWE…TLETMAALVA (73 aa). Serine 4276 is subject to O-(pantetheine 4'-phosphoryl)serine. The interval 4367-4598 is reductase (R) domain; the sequence is LTGSTGFLGR…ISVHTVAAAI (232 aa).

This sequence in the C-terminal section; belongs to the NRP synthetase family.

Its pathway is secondary metabolite biosynthesis. PKS-NRPS hybrid synthetase; part of the gene cluster that mediates the biosynthesis of chaetoglobosin A which has a unique inhibitory activity against actin polymerization in mammalian cells. Chaetoglobosin A and its intermediates are involved in the morphological differentiation of C.globosum. The first step of the pathway is the synthesis of prochaetoglobosin I via condensation of one acetyl-CoA, 8 malonyl-CoA, and a L-tryptophan molecule by the PKS-NRPS hybrid synthetase cheA, followed by reduction of backbone double bond to install desired geometry by the enoyl reductase cheB. Further multiple oxidation steps performed by the cytochrome P450 monooxygenases cheE and cheG, as well as by the FAD-linked oxidoreductase cheF, lead to the formation of chaetoglobosin A. Depending on the order of action of these reductases, distinct intermediates can be identified. Within the pathway, the cytochrome P450 monooxygenase cheE catalyzes a stereospecific epoxidation on prochaetoglobosin I, cytoglobosin D, and chaetoglobosin J intermediates. The FAD-linked oxidoreductase cheF performs dehydrogenation of the C-20 hydroxyl groups in the 20-dihyrochaetoglobosin A and cytoglobosin D intermediates. Finally, the cytochrome P450 monooxygenase cheG can catalyze the stereospecific dihydroxylation of prochaetoglobosin I and prochaetoglobosin IV at C-19 and C-20, respectively. The Diels-Alderase cheD may play a role in the post-PKS-NRPS biosynthetic steps catalyzing Diels-Alder cyclization. This Chaetomium globosum (strain ATCC 6205 / CBS 148.51 / DSM 1962 / NBRC 6347 / NRRL 1970) (Soil fungus) protein is PKS-NRPS hybrid synthetase cheA.